A 272-amino-acid polypeptide reads, in one-letter code: MAIHLYKTSTSSTRNGAVQVKSNPRNNLISGQRRCGKGRNARGIITARHRGGGHKRLYRKIDFRRNEKDIYGKIVTIEYDPNRNAYICLIHYGDGEKRYILHPRGAIIGDTIVSGTEVPIKMGNALPLTDMPLGTAIHNIEITLGRGGQLARAAGAVAKLIAKEGKSATLKLPSGEVRLISKNCSATVGQVGNVGVNQKRLGRAGSKRWLGKRPVVRGVVMNPVDHPHGGGEGRAPIGRKSPTTPWGYPALGRRSRKRNKYSDNFIIRRRSK.

Disordered regions lie at residues 1–33 (MAIH…SGQR) and 220–272 (VMNP…RRSK). A2 carries the N-methylalanine modification. Residues 7-30 (KTSTSSTRNGAVQVKSNPRNNLIS) show a composition bias toward polar residues.

It belongs to the universal ribosomal protein uL2 family. In terms of assembly, component of the chloroplast large ribosomal subunit (LSU). Mature 70S chloroplast ribosomes of higher plants consist of a small (30S) and a large (50S) subunit. The 30S small subunit contains 1 molecule of ribosomal RNA (16S rRNA) and 24 different proteins. The 50S large subunit contains 3 rRNA molecules (23S, 5S and 4.5S rRNA) and 33 different proteins.

The protein localises to the plastid. The protein resides in the chloroplast. Its function is as follows. Component of the chloroplast ribosome (chloro-ribosome), a dedicated translation machinery responsible for the synthesis of chloroplast genome-encoded proteins, including proteins of the transcription and translation machinery and components of the photosynthetic apparatus. The polypeptide is Large ribosomal subunit protein uL2cz/uL2cy (rpl2-A) (Spinacia oleracea (Spinach)).